Here is a 352-residue protein sequence, read N- to C-terminus: DNA polymerase IV (352 aa).

The 181-residue stretch at 6 to 186 (IIHIDMDAFY…LPLGKIPGAG (181 aa)) folds into the UmuC domain. 2 residues coordinate Mg(2+): Asp-10 and Asp-104. Glu-105 is a catalytic residue.

The protein belongs to the DNA polymerase type-Y family. In terms of assembly, monomer. Mg(2+) serves as cofactor.

The protein resides in the cytoplasm. It catalyses the reaction DNA(n) + a 2'-deoxyribonucleoside 5'-triphosphate = DNA(n+1) + diphosphate. Poorly processive, error-prone DNA polymerase involved in untargeted mutagenesis. Copies undamaged DNA at stalled replication forks, which arise in vivo from mismatched or misaligned primer ends. These misaligned primers can be extended by PolIV. Exhibits no 3'-5' exonuclease (proofreading) activity. May be involved in translesional synthesis, in conjunction with the beta clamp from PolIII. In Neisseria gonorrhoeae (strain ATCC 700825 / FA 1090), this protein is DNA polymerase IV.